The chain runs to 589 residues: Serine/threonine-protein kinase shk2 (589 aa).

A PH domain is found at 23–125; the sequence is GIIRSGWVML…WMDLISSRAL (103 aa). In terms of domain architecture, CRIB spans 129–142; the sequence is VSSPMNPKHQVHVG. The Protein kinase domain maps to 309-566; it reads FNVKHKLGQG…AAELLTHSFL (258 aa). ATP contacts are provided by residues 315 to 323 and Lys343; that span reads LGQGASGSV. Asp434 serves as the catalytic Proton acceptor.

Belongs to the protein kinase superfamily. STE Ser/Thr protein kinase family. STE20 subfamily.

It carries out the reaction L-seryl-[protein] + ATP = O-phospho-L-seryl-[protein] + ADP + H(+). The catalysed reaction is L-threonyl-[protein] + ATP = O-phospho-L-threonyl-[protein] + ADP + H(+). Functionally, forms an activated complex with GTP-bound Ras-like cdc42. Participates in Ras-dependent morphological control and mating response pathways. This chain is Serine/threonine-protein kinase shk2 (shk2), found in Schizosaccharomyces pombe (strain 972 / ATCC 24843) (Fission yeast).